Consider the following 496-residue polypeptide: Sporulation-killing factor biosynthesis protein SkfC (496 aa).

A run of 7 helical transmembrane segments spans residues 1–21, 224–244, 248–268, 291–311, 331–351, 399–419, and 443–463; these read MNSLSLVFWSILAVVGLLLFI, VSGMLGSALAMILAILILVFM, TSIIFSLVLGLLIIICQSLTL, LLGILSTLLTGLLTGFVVFIC, IVQIFYGIGAGLISLGVTSLL, LLMIPVIWWMSGNILISIIVS, and FIFGCFLGVLFIKFGFICVLV.

Its subcellular location is the membrane. Required for production of the bacteriocin SkfA. The polypeptide is Sporulation-killing factor biosynthesis protein SkfC (Bacillus subtilis (strain 168)).